The primary structure comprises 164 residues: Ribonuclease P protein component 2 (164 aa).

The protein belongs to the eukaryotic/archaeal RNase P protein component 2 family. Consists of a catalytic RNA component and at least 4-5 protein subunits.

It is found in the cytoplasm. The enzyme catalyses Endonucleolytic cleavage of RNA, removing 5'-extranucleotides from tRNA precursor.. In terms of biological role, part of ribonuclease P, a protein complex that generates mature tRNA molecules by cleaving their 5'-ends. The sequence is that of Ribonuclease P protein component 2 from Halobacterium salinarum (strain ATCC 29341 / DSM 671 / R1).